The sequence spans 229 residues: Synaptogyrin-3 (229 aa).

N-acetylmethionine is present on Met1. In terms of domain architecture, MARVEL spans 20–172 (FARRPQTLLR…LTVKALQRFR (153 aa)). The next 4 helical transmembrane spans lie at 30–50 (VASWVFSIAVFGPIVNEGYVN), 70–90 (FGVALGLGAFLACAAFLLLDV), 105–125 (VLLDLGFSGLWSFLWFVGFCF), and 148–168 (AAIAFSFFSILSWVALTVKAL). Residues 209–219 (QSPPFTETLDT) are compositionally biased toward polar residues. The disordered stretch occupies residues 209-229 (QSPPFTETLDTSPKGYQVPAY).

Belongs to the synaptogyrin family. As to quaternary structure, interacts (via N-terminus) with SLC6A3 (via N-terminus). May interact with VMAT2. Expressed in brain and placenta.

The protein resides in the cytoplasmic vesicle. The protein localises to the secretory vesicle. Its subcellular location is the synaptic vesicle membrane. It localises to the synapse. Its function is as follows. May play a role in regulated exocytosis. May indirectly regulate the activity of the plasma membrane dopamine transporter SLC6A3 and thereby regulate dopamine transport back from the synaptic cleft into the presynaptic terminal. This chain is Synaptogyrin-3, found in Homo sapiens (Human).